The primary structure comprises 1110 residues: Error-prone DNA polymerase (1110 aa).

Residues 1072–1110 (LGELHEPLNDDRREHPDNPAQRIRHPRDVRILPPSRDFH) form a disordered region. Composition is skewed to basic and acidic residues over residues 1073–1088 (GELHEPLNDDRREHPD) and 1097–1110 (PRDVRILPPSRDFH).

The protein belongs to the DNA polymerase type-C family. DnaE2 subfamily.

Its subcellular location is the cytoplasm. It carries out the reaction DNA(n) + a 2'-deoxyribonucleoside 5'-triphosphate = DNA(n+1) + diphosphate. Functionally, DNA polymerase involved in damage-induced mutagenesis and translesion synthesis (TLS). It is not the major replicative DNA polymerase. The protein is Error-prone DNA polymerase of Rhodopseudomonas palustris (strain BisB5).